Reading from the N-terminus, the 452-residue chain is Golgi reassembly-stacking protein 2 (452 aa).

Gly2 carries N-myristoyl glycine lipidation. PDZ GRASP-type domains follow at residues 15-105 and 111-199; these read EGYH…FCSF and NVWH…YGYL. Residues 15–215 are GRASP; the sequence is EGYHVLRVQE…PFEEGKKISL (201 aa). Dimethylated arginine occurs at positions 30 and 47. Residues 194-199 form an important for membrane binding region; the sequence is IGYGYL. Ser214 is subject to Phosphoserine. Phosphothreonine is present on residues Thr222 and Thr225. Positions 372–424 are enriched in low complexity; it reads PESSSAASSGELLSSLPPTSNAPSDPATTTAKADAASSLTVDVTPPTAKAPTT. The interval 372 to 452 is disordered; sequence PESSSAASSG…AVDANASESP (81 aa). Phosphoserine is present on Ser409. A phosphothreonine mark is found at Thr415 and Thr433. 4 positions are modified to phosphoserine: Ser436, Ser441, Ser449, and Ser451.

Belongs to the GORASP family. As to quaternary structure, homodimer. Homooligomer. ER stress induces phosphorylation-dependent monomerization. Interacts with BLZF1/Golgin 45. Identified in a complex with RAB2 and GORASP2. Interacts with JAM2 and JAM3. Interacts with members of the p24 cargo receptors. Interacts with CNIH1 and the cytoplasmic domain of transmembrane TGFA, prior its transit in the trans-Golgi. Interacts with KCTD5. Interacts with TMED2 and TMED3. Interacts with SEC16A in response to ER stress. Interacts (via PDZ GRASP-type 1 domain) with core-glycosylated CFTR in response to ER stress. Post-translationally, myristoylated. Myristoylation is essential for the Golgi targeting. Palmitoylated. In terms of processing, phosphorylated in mitotic cells. ER stress-induced phosphorylation at Ser-441 induces monomerization and subsequent relocalization from Golgi to ER which is essential for mediating unconventional (ER/Golgi-independent) trafficking of CFTR to the cell membrane.

It is found in the golgi apparatus membrane. Its subcellular location is the endoplasmic reticulum membrane. The protein localises to the golgi apparatus. Its function is as follows. Key structural protein of the Golgi apparatus. The membrane cisternae of the Golgi apparatus adhere to each other to form stacks, which are aligned side by side to form the Golgi ribbon. Acting in concert with GORASP1/GRASP65, is required for the formation and maintenance of the Golgi ribbon, and may be dispensable for the formation of stacks. However, other studies suggest that GORASP2 plays a role in the assembly and membrane stacking of the Golgi cisternae, and in the process by which Golgi stacks reform after breakdown during mitosis and meiosis. May regulate the intracellular transport and presentation of a defined set of transmembrane proteins, such as transmembrane TGFA. Required for normal acrosome formation during spermiogenesis and normal male fertility, probably by promoting colocalization of JAM2 and JAM3 at contact sites between germ cells and Sertoli cells. Mediates ER stress-induced unconventional (ER/Golgi-independent) trafficking of core-glycosylated CFTR to cell membrane. This chain is Golgi reassembly-stacking protein 2 (GORASP2), found in Homo sapiens (Human).